The primary structure comprises 500 residues: Probable malate:quinone oxidoreductase (500 aa).

The protein belongs to the MQO family. Requires FAD as cofactor.

The enzyme catalyses (S)-malate + a quinone = a quinol + oxaloacetate. It functions in the pathway carbohydrate metabolism; tricarboxylic acid cycle; oxaloacetate from (S)-malate (quinone route): step 1/1. This is Probable malate:quinone oxidoreductase from Bacillus cereus (strain ATCC 10987 / NRS 248).